The following is a 433-amino-acid chain: UDP-N-acetylglucosamine 1-carboxyvinyltransferase (433 aa).

Lys34–Asn35 contributes to the phosphoenolpyruvate binding site. Arg104 is a binding site for UDP-N-acetyl-alpha-D-glucosamine. Cys128 serves as the catalytic Proton donor. Cys128 bears the 2-(S-cysteinyl)pyruvic acid O-phosphothioketal mark. The UDP-N-acetyl-alpha-D-glucosamine site is built by Asp320 and Ile342.

The protein belongs to the EPSP synthase family. MurA subfamily.

The protein resides in the cytoplasm. It carries out the reaction phosphoenolpyruvate + UDP-N-acetyl-alpha-D-glucosamine = UDP-N-acetyl-3-O-(1-carboxyvinyl)-alpha-D-glucosamine + phosphate. The protein operates within cell wall biogenesis; peptidoglycan biosynthesis. In terms of biological role, cell wall formation. Adds enolpyruvyl to UDP-N-acetylglucosamine. This chain is UDP-N-acetylglucosamine 1-carboxyvinyltransferase, found in Synechococcus sp. (strain CC9605).